The primary structure comprises 857 residues: Mitogen-activated protein kinase kinase kinase dlk-1 (857 aa).

The Protein kinase domain maps to 62 to 304; the sequence is ISNLEWLGSG…FSHIRQHWEI (243 aa). ATP contacts are provided by residues 68 to 76 and Lys-89; that span reads LGSGSQGAV. Residue Asp-173 is the Proton acceptor of the active site. Disordered regions lie at residues 441–503, 572–625, 733–775, and 818–857; these read EEMS…ISRN, RIAS…PSRN, NAND…MESE, and HSIK…AVRI. Positions 467–488 are enriched in low complexity; that stretch reads SSGAQSSPFSRQSSCRSSAGQQ. Residues 609-623 are compositionally biased toward polar residues; the sequence is APRSSSKLNRSSYPS. Over residues 753–762 the composition is skewed to acidic residues; it reads ADVESSEDEG. Over residues 763 to 772 the composition is skewed to polar residues; it reads NGNNILNTSM.

This sequence belongs to the protein kinase superfamily. STE Ser/Thr protein kinase family. MAP kinase kinase kinase subfamily. The cofactor is Mg(2+). In terms of processing, ubiquitinated by rpm-1. Negatively regulated by ubiquitination by fsn-1 bound rpm-1, followed by degradation.

Its subcellular location is the synapse. It carries out the reaction L-seryl-[protein] + ATP = O-phospho-L-seryl-[protein] + ADP + H(+). The catalysed reaction is L-threonyl-[protein] + ATP = O-phospho-L-threonyl-[protein] + ADP + H(+). In terms of biological role, component of a MAP kinase pathway that functions presynaptically to regulate synaptic architecture and presynaptic differentiation. Phosphorylates and activates mkk-4. The polypeptide is Mitogen-activated protein kinase kinase kinase dlk-1 (Caenorhabditis briggsae).